Reading from the N-terminus, the 634-residue chain is Nicotinic receptor-associated protein 1 (634 aa).

C2 domains follow at residues 1–141 and 159–295; these read MNQP…KAHL and KTGS…EILL. Ca(2+) contacts are provided by Leu-29, Asp-30, Asp-36, Asp-105, Asp-107, Asp-119, Asp-189, Asp-195, Asp-251, Asp-253, and Asp-271. Residues 338–557 form the VWFA domain; sequence DFAVAVDFTA…LDPDVIQENL (220 aa). Residues 576–603 are disordered; that stretch reads RGFQPRPVDDPWRRDSPPPEFDPILDGT. The span at 582–592 shows a compositional bias: basic and acidic residues; the sequence is PVDDPWRRDSP.

Belongs to the copine family. Interacts with nicotinic acetylcholine receptor. Ca(2+) serves as cofactor. In terms of tissue distribution, expressed in head and tail neurons, ventral cord moto-neurons, body wall muscles and hypodermal cells of the vulva.

It localises to the cell membrane. Its function is as follows. Exhibits calcium-dependent phospholipid binding properties. May function in membrane trafficking. Regulates synaptic levels of nicotinic acetylcholine receptor subunit lev-1 and unc-38 in the nerve cord. Involved in nicotinic acetylcholine receptor (nAChR)-mediated sensitivity to nicotine and levamisole. Affects directional sperm motility. This is Nicotinic receptor-associated protein 1 (nra-1) from Caenorhabditis elegans.